Reading from the N-terminus, the 388-residue chain is S-adenosylmethionine synthase (388 aa).

ATP is bound at residue histidine 16. Position 18 (aspartate 18) interacts with Mg(2+). Position 44 (glutamate 44) interacts with K(+). The L-methionine site is built by glutamate 57 and glutamine 100. The tract at residues 100-110 (QSPDIAQGVDK) is flexible loop. ATP contacts are provided by residues 167-169 (DAK), 233-234 (RF), aspartate 242, 248-249 (RK), alanine 265, and lysine 269. Aspartate 242 serves as a coordination point for L-methionine. Lysine 273 contacts L-methionine.

The protein belongs to the AdoMet synthase family. In terms of assembly, homotetramer; dimer of dimers. The cofactor is Mg(2+). Requires K(+) as cofactor.

Its subcellular location is the cytoplasm. The catalysed reaction is L-methionine + ATP + H2O = S-adenosyl-L-methionine + phosphate + diphosphate. It participates in amino-acid biosynthesis; S-adenosyl-L-methionine biosynthesis; S-adenosyl-L-methionine from L-methionine: step 1/1. Functionally, catalyzes the formation of S-adenosylmethionine (AdoMet) from methionine and ATP. The overall synthetic reaction is composed of two sequential steps, AdoMet formation and the subsequent tripolyphosphate hydrolysis which occurs prior to release of AdoMet from the enzyme. The polypeptide is S-adenosylmethionine synthase (Polynucleobacter necessarius subsp. necessarius (strain STIR1)).